Reading from the N-terminus, the 184-residue chain is Spiro-conjugate synthase (184 aa).

Cysteine 57 and cysteine 184 are joined by a disulfide. (1S,3R,6R,8R,9R,11R,14S,15S,19R,20R)-8-ethyl-9,15-dihydroxy-3,4,6,20-tetramethyl-21,23-dioxo-24-azapentacyclo[20.2.1.0(1,6).0(11,20).0(14,19)]pentacosa-4,12,22(25)-trien-25-olate is bound at residue glutamine 115.

As to quaternary structure, homodimer.

The enzyme catalyses 4-[(1R,2R,4aS,5S,8aR)-2-[(2R,3R,5E,7E)-3-ethyl-2-hydroxy-5,7-dimethylnona-5,7-dien-1-yl]-5-hydroxy-1-methyl-1,2,4a,5,6,7,8,8a-octahydronaphthalene-1-carbonyl]-2-methylidene-5-oxo-2,5-dihydro-1H-pyrrol-3-olate = (1S,3R,6R,8R,9R,11R,14S,15S,19R,20R)-8-ethyl-9,15-dihydroxy-3,4,6,20-tetramethyl-21,23-dioxo-24-azapentacyclo[20.2.1.0(1,6).0(11,20).0(14,19)]pentacosa-4,12,22(25)-trien-25-olate. The protein operates within antibiotic biosynthesis. Functionally, involved in the biosynthesis of the spirotetramate antibiotics pyrroindomycins. Catalyzes the intramolecular cyclization forming the spiro-conjugate moiety in pyrroindomycins, via an exo-selective [4+2] cycloaddition reaction. This Streptomyces rugosporus protein is Spiro-conjugate synthase.